A 149-amino-acid chain; its full sequence is MFQDAEEKPRTLHDLCQALETSVHEIELKCVECKKTLQRSEVYDFVFADLRIVYRDGNPFAVCKVCLRLLSKISEYRHYNYSLYGDTLEQTLKKCLNEILIRCIICQRPLCPQEKKRHVDLNKRFHNISGRWTGRCAVCWRPRRRQTQV.

2 zinc fingers span residues C30–C66 and C103–C139. The short motif at T147 to V149 is the PDZ-binding domain element.

The protein belongs to the papillomaviridae E6 protein family. In terms of assembly, forms homodimers. Interacts with ubiquitin-protein ligase UBE3A/E6-AP and thus forms a complex with human TP53. Interacts with human NFX1 and MAGI3. Interacts with human IRF3; this interaction inhibits the establishment of antiviral state. Interacts with human TYK2; this interaction inhibits JAK-STAT activation by interferon alpha. Interacts with host DLG1; this interaction leads to the proteasomal degradation of DLG1.

The protein resides in the host cytoplasm. It is found in the host nucleus. Functionally, plays a major role in the induction and maintenance of cellular transformation. Acts mainly as an oncoprotein by stimulating the destruction of many host cell key regulatory proteins. E6 associates with host UBE3A/E6-AP ubiquitin-protein ligase, and inactivates tumor suppressors TP53 and TP73 by targeting them to the 26S proteasome for degradation. In turn, DNA damage and chromosomal instabilities increase and lead to cell proliferation and cancer development. The complex E6/E6AP targets several other substrates to degradation via the proteasome including host DLG1 or NFX1, a repressor of human telomerase reverse transcriptase (hTERT). The resulting increased expression of hTERT prevents the shortening of telomere length leading to cell immortalization. Other cellular targets including BAK1, Fas-associated death domain-containing protein (FADD) and procaspase 8, are degraded by E6/E6AP causing inhibition of apoptosis. E6 also inhibits immune response by interacting with host IRF3 and TYK2. These interactions prevent IRF3 transcriptional activities and inhibit TYK2-mediated JAK-STAT activation by interferon alpha resulting in inhibition of the interferon signaling pathway. The polypeptide is Protein E6 (Human papillomavirus 58).